We begin with the raw amino-acid sequence, 198 residues long: Na(+)-translocating NADH-quinone reductase subunit E (198 aa).

Helical transmembrane passes span 11 to 31, 35 to 55, 77 to 97, 109 to 129, 140 to 160, and 176 to 196; these read AVFI…FLAV, VTTA…SVPA, FLNF…LEMI, LGIF…VSFM, IVYG…LASI, and LGIT…FSGV.

This sequence belongs to the NqrDE/RnfAE family. Composed of six subunits; NqrA, NqrB, NqrC, NqrD, NqrE and NqrF.

It localises to the cell inner membrane. It carries out the reaction a ubiquinone + n Na(+)(in) + NADH + H(+) = a ubiquinol + n Na(+)(out) + NAD(+). Functionally, NQR complex catalyzes the reduction of ubiquinone-1 to ubiquinol by two successive reactions, coupled with the transport of Na(+) ions from the cytoplasm to the periplasm. NqrA to NqrE are probably involved in the second step, the conversion of ubisemiquinone to ubiquinol. The protein is Na(+)-translocating NADH-quinone reductase subunit E of Photorhabdus laumondii subsp. laumondii (strain DSM 15139 / CIP 105565 / TT01) (Photorhabdus luminescens subsp. laumondii).